Consider the following 4538-residue polypeptide: Polyketide synthase PksL (4538 aa).

Residues 1 to 123 form an N-terminal hotdog fold 1 region; sequence MRWRSNVKKI…ADMHADSPAI (123 aa). Positions 1–285 constitute a PKS/mFAS DH 1 domain; that stretch reads MRWRSNVKKI…SKLVREAELI (285 aa). The active-site Proton acceptor; for dehydratase activity 1 is the His26. The tract at residues 138–285 is C-terminal hotdog fold 1; the sequence is QNVVQLDDVY…SKLVREAELI (148 aa). The active-site Proton donor; for dehydratase activity 1 is Asp199. The interval 289–314 is disordered; it reads HQDAQETQMTRADTAERDKPADMVSS. In terms of domain architecture, Carrier 1 spans 320-394; the sequence is SEAEQFVSQL…ELSAFLAEEY (75 aa). Ser354 bears the O-(pantetheine 4'-phosphoryl)serine mark. Residues 433 to 871 enclose the Ketosynthase family 3 (KS3) 1 domain; that stretch reads AGDIAIIGLA…GSNAHIILEE (439 aa). Residues Cys609, His744, and His784 each act as for beta-ketoacyl synthase 1 activity in the active site. The dehydratase stretch occupies residues 1048–1226; the sequence is HILHPLLHQN…DSLYAGENGV (179 aa). The tract at residues 1051-1175 is N-terminal hotdog fold 2; sequence HPLLHQNVSD…GSAVLCEAGE (125 aa). The 290-residue stretch at 1051–1340 folds into the PKS/mFAS DH 2 domain; sequence HPLLHQNVSD…ARVLETDQEG (290 aa). The active-site Proton acceptor; for dehydratase activity 2 is the His1080. The segment at 1189–1340 is C-terminal hotdog fold 2; sequence NGRTLSPFDC…ARVLETDQEG (152 aa). Catalysis depends on Asp1251, which acts as the Proton donor; for dehydratase activity 2. The tract at residues 1520-1713 is beta-ketoacyl reductase 1; it reads KGVYLITGGA…WKDGGMQIDA (194 aa). The region spanning 1800 to 1873 is the Carrier 2 domain; it reads EKAENYFKQV…SLTRYFIDSR (74 aa). At Ser1834 the chain carries O-(pantetheine 4'-phosphoryl)serine. In terms of domain architecture, Ketosynthase family 3 (KS3) 2 spans 1926–2365; it reads TEEIAIIGIS…GVNAHILIEE (440 aa). Active-site for beta-ketoacyl synthase 2 activity residues include Cys2103, His2238, and His2278. A disordered region spans residues 2546–2568; sequence TEEPFAPVQPVIPKPSVDREASG. Carrier domains follow at residues 2597-2674 and 2738-2815; these read ITAE…AHEL and VAIE…KSEL. Residues Ser2634 and Ser2775 each carry the O-(pantetheine 4'-phosphoryl)serine modification. The segment at 2828–2854 is disordered; that stretch reads SFEAAQQKPAASSHPKPAERPLQPVQH. Residues 2873 to 3294 form the Ketosynthase family 3 (KS3) 3 domain; the sequence is EDAIAIVGMS…GTNAHIVIEE (422 aa). Active-site for beta-ketoacyl synthase 3 activity residues include Cys3040, His3175, and His3215. Residues 3686-3887 are beta-ketoacyl reductase 2; that stretch reads DKVLLITGGT…PNWKETGLGE (202 aa). The 78-residue stretch at 3960-4037 folds into the Carrier 5 domain; the sequence is NLFPETVDWL…SFAHWLISKY (78 aa). Residue Ser3997 is modified to O-(pantetheine 4'-phosphoryl)serine. Residues 4082–4485 enclose the Ketosynthase family 3 (KS3) 4 domain; it reads AEDIAIIGLS…GTNAHLIIEG (404 aa). The active-site For beta-ketoacyl synthase 4 activity is the Cys4237.

Requires pantetheine 4'-phosphate as cofactor.

It localises to the cytoplasm. It participates in antibiotic biosynthesis; bacillaene biosynthesis. Involved in some intermediate steps for the synthesis of the antibiotic polyketide bacillaene which is involved in secondary metabolism. The protein is Polyketide synthase PksL (pksL) of Bacillus subtilis (strain 168).